Reading from the N-terminus, the 385-residue chain is Histidinol-phosphate aminotransferase (385 aa).

Lys-235 bears the N6-(pyridoxal phosphate)lysine mark.

It belongs to the class-II pyridoxal-phosphate-dependent aminotransferase family. Histidinol-phosphate aminotransferase subfamily. As to quaternary structure, homodimer. Requires pyridoxal 5'-phosphate as cofactor.

It carries out the reaction L-histidinol phosphate + 2-oxoglutarate = 3-(imidazol-4-yl)-2-oxopropyl phosphate + L-glutamate. Its pathway is amino-acid biosynthesis; L-histidine biosynthesis; L-histidine from 5-phospho-alpha-D-ribose 1-diphosphate: step 7/9. This chain is Histidinol-phosphate aminotransferase, found in Nocardia farcinica (strain IFM 10152).